Consider the following 362-residue polypeptide: Putative F-box protein At3g25750 (362 aa).

Positions 4-52 (TEWSDLPEELLDLIANRYSSNIDVLRIRSTCKSWRSAVAMSKERLQFRF) constitute an F-box domain.

The sequence is that of Putative F-box protein At3g25750 from Arabidopsis thaliana (Mouse-ear cress).